The following is a 306-amino-acid chain: UDP-N-acetylenolpyruvoylglucosamine reductase (306 aa).

The 166-residue stretch at 34–199 (KSGGAAEWLF…VAATFRGHAE (166 aa)) folds into the FAD-binding PCMH-type domain. Arginine 179 is an active-site residue. Residues 215-234 (REASQPLRSRTGGSTFKNPQ) are disordered. The span at 220-232 (PLRSRTGGSTFKN) shows a compositional bias: polar residues. Catalysis depends on serine 228, which acts as the Proton donor. Glutamate 298 is an active-site residue.

The protein belongs to the MurB family. The cofactor is FAD.

The protein localises to the cytoplasm. It catalyses the reaction UDP-N-acetyl-alpha-D-muramate + NADP(+) = UDP-N-acetyl-3-O-(1-carboxyvinyl)-alpha-D-glucosamine + NADPH + H(+). The protein operates within cell wall biogenesis; peptidoglycan biosynthesis. In terms of biological role, cell wall formation. In Rhizorhabdus wittichii (strain DSM 6014 / CCUG 31198 / JCM 15750 / NBRC 105917 / EY 4224 / RW1) (Sphingomonas wittichii), this protein is UDP-N-acetylenolpyruvoylglucosamine reductase.